We begin with the raw amino-acid sequence, 172 residues long: Small ribosomal subunit protein uS5 (172 aa).

The S5 DRBM domain maps to 13–76 (LVEKMISVNR…EQARHNMMKI (64 aa)).

Belongs to the universal ribosomal protein uS5 family. As to quaternary structure, part of the 30S ribosomal subunit. Contacts proteins S4 and S8.

In terms of biological role, with S4 and S12 plays an important role in translational accuracy. Its function is as follows. Located at the back of the 30S subunit body where it stabilizes the conformation of the head with respect to the body. The polypeptide is Small ribosomal subunit protein uS5 (Chromobacterium violaceum (strain ATCC 12472 / DSM 30191 / JCM 1249 / CCUG 213 / NBRC 12614 / NCIMB 9131 / NCTC 9757 / MK)).